Consider the following 367-residue polypeptide: F-box protein At3g56470 (367 aa).

Residues 1 to 18 (MVTRRRSKKKKKTKRKKQ) show a composition bias toward basic residues. Residues 1-24 (MVTRRRSKKKKKTKRKKQSSKEKE) form a disordered region. The region spanning 26–81 (YQTFINLPCDLLQLVISRLPLKDNIRASAVCKTWHEACVSLRVIHTSPWLIYFSKT) is the F-box domain.

This chain is F-box protein At3g56470, found in Arabidopsis thaliana (Mouse-ear cress).